The sequence spans 427 residues: MDRETRTFAERYYRDLRDPVPSGGGGPTPSGVTFIQTPNAFSYADFVKGFLLPNLPCVFSSAFTEGWGSRRRWVTSEGKPDFEYLQQKYGDAVVPVANCGVREYNSNPKEHMSFRDYISYWKDYIQGSYSSSRGCLYLKDWHLCRDSLVNDLEDIFTLPVYFSSDWLNEFWDVLNVDDYRFVYAGPRGTWSPFHADIFRSFSWSVNICGKKKWLFFPPGEEEALRDCHGNLPYDVTSTELLDTHLYPKIQHHSLPIEVIQEPGEMVFVPSGWHHQVYNLDDTISINHNWVNGCNLPNMWHFLQQELQAVQHEVEEWKDSMPDWHHHCQVIMKSCTGINFEEFYHFLKVIAEKRLLVLEQGLKGDSGDSRSLDLGLQQAAFDIGRLADVLASVVVNPDFQRVDTSAFSPQPEELLQQLEDAVAAAEAL.

One can recognise a JmjC domain in the interval 147–306 (SLVNDLEDIF…NMWHFLQQEL (160 aa)). Residues H194, D196, and H274 each contribute to the Fe cation site.

It belongs to the JMJD6 family. Interacts with ETF1. Interacts with the ETF1-GSPT1 complex. Fe(2+) is required as a cofactor.

The protein localises to the cytoplasm. The enzyme catalyses L-lysyl-[protein] + 2-oxoglutarate + O2 = 4-hydroxy-L-lysyl-[protein] + succinate + CO2. Catalyzes the 2-oxoglutarate and iron-dependent C4-lysyl hydroxylation of ETF1 at 'Lys-63' thereby promoting the translational termination efficiency of ETF1. Not essential for embryonic stem cell (ESC) maintenance and the embryonic and postnatal development. This chain is 2-oxoglutarate and iron-dependent oxygenase JMJD4 (Jmjd4), found in Mus musculus (Mouse).